The primary structure comprises 417 residues: Gamma-glutamyl phosphate reductase (417 aa).

This sequence belongs to the gamma-glutamyl phosphate reductase family.

Its subcellular location is the cytoplasm. It catalyses the reaction L-glutamate 5-semialdehyde + phosphate + NADP(+) = L-glutamyl 5-phosphate + NADPH + H(+). It participates in amino-acid biosynthesis; L-proline biosynthesis; L-glutamate 5-semialdehyde from L-glutamate: step 2/2. Its function is as follows. Catalyzes the NADPH-dependent reduction of L-glutamate 5-phosphate into L-glutamate 5-semialdehyde and phosphate. The product spontaneously undergoes cyclization to form 1-pyrroline-5-carboxylate. In Sodalis glossinidius (strain morsitans), this protein is Gamma-glutamyl phosphate reductase.